We begin with the raw amino-acid sequence, 1629 residues long: CRISPR-associated endonuclease Cas9 (1629 aa).

Positions 1–51 (MNFKILPIAIDLGVKNTGVFSAFYQKGTSLERLDNKNGKVYELSKDSYTLL) are ruvC-I. Residue D11 is the For RuvC-like nuclease domain of the active site. Residue D11 participates in Mn(2+) binding. Residues 55–73 (RTARRHQRRGIDRKQLVKR) form an ARM region. Residues 83-858 (LNLEWDKDTQ…RLPAIPTRIV (776 aa)) are recognition domain (REC). C460 contacts Zn(2+). A coiled-coil region spans residues 555-582 (EIYFQAKKLKQKASSELEKLESSKKLDE). Residues C657, C814, and C817 each contribute to the Zn(2+) site. The segment at 858 to 899 (VDGAVKKMATILAKNIVDDNWQNIKQVLSAKHQLHIPIITES) is ruvC-II. The Mg(2+) site is built by D876 and N880. Positions 897–1046 (TESNAFEFEP…NKKDFKFGNY (150 aa)) constitute an HNH Cas9-type domain. The active-site Proton acceptor for HNH nuclease domain is N995. The tract at residues 1088–1224 (VNGTQRYFAE…TDNEFSDKKL (137 aa)) is ruvC-III. H1162 serves as a coordination point for Mn(2+). The PAM-binding signature appears at 1473-1474 (SR). The segment at 1476-1629 (DGTKPFIPAF…AGIYNETSNN (154 aa)) is PAM-interacting domain (PI). RNA-binding residues include R1556 and R1585.

Belongs to the CRISPR-associated protein Cas9 family. Subtype II-B subfamily. Monomer. Binds crRNA and tracrRNA. The cofactor is Mg(2+). Zn(2+) is required as a cofactor.

Its function is as follows. CRISPR (clustered regularly interspaced short palindromic repeat) is an adaptive immune system that provides protection against mobile genetic elements (viruses, transposable elements and conjugative plasmids). CRISPR clusters contain spacers, sequences complementary to antecedent mobile elements, and target invading nucleic acids. CRISPR clusters are transcribed and processed into CRISPR RNA (crRNA). In type II CRISPR systems correct processing of pre-crRNA requires a trans-encoded small RNA (tracrRNA), endogenous ribonuclease 3 (rnc) and this protein. The tracrRNA serves as a guide for ribonuclease 3-aided processing of pre-crRNA. Subsequently Cas9/crRNA/tracrRNA endonucleolytically cleaves linear or circular dsDNA target complementary to the spacer; Cas9 is inactive in the absence of the 2 guide RNAs (gRNA). Cas9 recognizes a short motif in the CRISPR repeat sequences (the PAM or protospacer adjacent motif) to help distinguish self versus nonself, as targets within the bacterial CRISPR locus do not have PAMs. PAM recognition is also required for catalytic activity. Cuts target DNA when Cas9 and gRNAs are mixed. Functionally, plays a role in repression of expression of endogenous bacterial lipoprotein FTN_1103. Cas9 plays a possibly non-enzymatic role in the degradation of FTN_1103 mRNA, which is dependent on formation of an RNA:RNA complex of tracrRNA and scaRNA (the latter is not found in all type II CRISPR-Cas systems). The chain is CRISPR-associated endonuclease Cas9 (cas9) from Francisella tularensis subsp. novicida (strain U112).